The sequence spans 803 residues: Subtilisin-like protease SBT5.5 (803 aa).

Positions 1–22 (MKRIFGIFIFLSLLLFLVPLLA) are cleaved as a signal peptide. A propeptide spans 23–112 (SCTKEKQVYI…KSDPRKYKIH (90 aa)) (activation peptide). In terms of domain architecture, Inhibitor I9 spans 30–108 (VYIVYFGEHK…VSVFKSDPRK (79 aa)). Residues 140-656 (KYDVNDRFRV…SRHFRPTKAA (517 aa)) form the Peptidase S8 domain. Aspartate 169 (charge relay system) is an active-site residue. A glycan (N-linked (GlcNAc...) asparagine) is linked at asparagine 202. Histidine 244 acts as the Charge relay system in catalysis. Residues 409-504 (YAPLVYAPDV…VFSSTVDRIL (96 aa)) enclose the PA domain. Serine 589 serves as the catalytic Charge relay system. Residue asparagine 725 is glycosylated (N-linked (GlcNAc...) asparagine).

This sequence belongs to the peptidase S8 family.

It localises to the secreted. This chain is Subtilisin-like protease SBT5.5, found in Arabidopsis thaliana (Mouse-ear cress).